The sequence spans 148 residues: Arginine repressor (148 aa).

The protein belongs to the ArgR family.

It is found in the cytoplasm. It functions in the pathway amino-acid biosynthesis; L-arginine biosynthesis [regulation]. Its function is as follows. Regulates arginine biosynthesis genes. The chain is Arginine repressor from Chlorobium limicola (strain DSM 245 / NBRC 103803 / 6330).